The chain runs to 236 residues: CD81 protein (236 aa).

Over 1–12 (MGVEGCTKCIKY) the chain is Cytoplasmic. Residues 13–33 (LLFVFNFVFWLAGGVILGVAL) form a helical membrane-spanning segment. The Extracellular segment spans residues 34 to 63 (WLRHDPQTTNLLYLELGDKPAPNTFYVGIY). The helical transmembrane segment at 64–84 (ILIAVGAVMMFVGFLGCYGAI) threads the bilayer. Residues 85–89 (QESQC) lie on the Cytoplasmic side of the membrane. The helical transmembrane segment at 90 to 112 (LLGTFFTCLVILFACEVAAGIWG) threads the bilayer. Residues 113-201 (FVNKDQIAKD…QKIDELFSGK (89 aa)) lie on the Extracellular side of the membrane. Intrachain disulfides connect Cys-156-Cys-190 and Cys-157-Cys-175. The helical transmembrane segment at 202 to 224 (LYLIGIAAIVVAVIMIFEMILSM) threads the bilayer. Glu-219 serves as a coordination point for cholesterol. Topologically, residues 225 to 236 (VLCCGIRNSSVY) are cytoplasmic.

This sequence belongs to the tetraspanin (TM4SF) family. In terms of assembly, homodimer. Part of a complex composed of CD19, CR2/CD21, CD81 and IFITM1/CD225 in the membrane of mature B cells. Interacts (via the second extracellular domain) with CD19; this interaction is initiated early during biosynthesis in the ER and enables trafficking of only properly folded CD19. Part of a complex that includes MHC class II/HLA-DR molecules and IFITM1. Interacts with IFITM1. Interacts with IFITM2 and IFITM3. Part of integrin-tetraspanin complex composed of CD9, CD81, beta-1 and beta-2 integrins in the membrane of monocyte/macrophages. Interacts (via the second extracellular domain) with integrin ITGAV:ITGB3. Interacts with CD247/CD3 zeta, ICAM1 and CD9 at the immune synapse on T cell membrane. Part of a GPCR-tetraspanin complex consisting at least of ADGRG1, CD81, possibly CD9, and GNA11 in which CD81 enhances the association of ADGRG1 with GNA11. Part of a complex composed of CD9, CD81, PTGFRN and IGSF8. Interacts directly with IGSF8. Interacts with CD53 and SCIMP. Interacts with SAMHD1 (via its C-terminus). Interacts with glypican GPC3 and with the transcriptional repressor HHEX; binding to GPC3 decreases the availability of free CD81 for binding to HHEX, resulting in nuclear translocation of HHEX and transcriptional repression. Interacts with CLDN1. Interacts with CLDN6 and CLDN9. Post-translationally, not glycosylated. In terms of processing, likely constitutively palmitoylated at low levels. Protein palmitoylation is up-regulated upon coligation of BCR and CD9-C2R-CD81 complexes in lipid rafts.

Its subcellular location is the cell membrane. It is found in the basolateral cell membrane. Its function is as follows. Structural component of specialized membrane microdomains known as tetraspanin-enriched microdomains (TERMs), which act as platforms for receptor clustering and signaling. Essential for trafficking and compartmentalization of CD19 receptor on the surface of activated B cells. Upon initial encounter with microbial pathogens, enables the assembly of CD19-CR2/CD21 and B cell receptor (BCR) complexes at signaling TERMs, lowering the threshold dose of antigen required to trigger B cell clonal expansion and antibody production. In T cells, facilitates the localization of CD247/CD3 zeta at antigen-induced synapses with B cells, providing for costimulation and polarization toward T helper type 2 phenotype. Present in MHC class II compartments, may also play a role in antigen presentation. Can act both as positive and negative regulator of homotypic or heterotypic cell-cell fusion processes. Positively regulates sperm-egg fusion and may be involved in acrosome reaction. In myoblasts, associates with CD9 and PTGFRN and inhibits myotube fusion during muscle regeneration. In macrophages, associates with CD9 and beta-1 and beta-2 integrins, and prevents macrophage fusion into multinucleated giant cells specialized in ingesting complement-opsonized large particles. Also prevents the fusion of mononuclear cell progenitors into osteoclasts in charge of bone resorption. May regulate the compartmentalization of enzymatic activities. In T cells, defines the subcellular localization of dNTPase SAMHD1 and permits its degradation by the proteasome, thereby controlling intracellular dNTP levels. Also involved in cell adhesion and motility. Positively regulates integrin-mediated adhesion of macrophages, particularly relevant for the inflammatory response in the lung. The chain is CD81 protein (CD81) from Saguinus oedipus (Cotton-top tamarin).